A 209-amino-acid polypeptide reads, in one-letter code: Outer-membrane lipoprotein LolB (209 aa).

A signal peptide spans Met-1–Ala-21. Cys-22 is lipidated: N-palmitoyl cysteine. The S-diacylglycerol cysteine moiety is linked to residue Cys-22.

Belongs to the LolB family. In terms of assembly, monomer.

It is found in the cell outer membrane. Its function is as follows. Plays a critical role in the incorporation of lipoproteins in the outer membrane after they are released by the LolA protein. The chain is Outer-membrane lipoprotein LolB from Haemophilus influenzae (strain 86-028NP).